An 89-amino-acid polypeptide reads, in one-letter code: DNA/RNA-binding protein Alba (89 aa).

At Lys11 the chain carries N6-acetyllysine.

The protein belongs to the histone-like Alba family. Post-translationally, acetylated. Acetylation at Lys-11 decreases DNA-binding affinity.

It localises to the cytoplasm. It is found in the chromosome. Functionally, binds double-stranded DNA tightly but without sequence specificity. Involved in DNA compaction. This Thermoplasma volcanium (strain ATCC 51530 / DSM 4299 / JCM 9571 / NBRC 15438 / GSS1) protein is DNA/RNA-binding protein Alba.